Consider the following 72-residue polypeptide: Crustacean hyperglycemic hormone (72 aa).

Residue Q1 is modified to Pyrrolidone carboxylic acid. Position 3 is a D-phenylalanine (F3). 3 cysteine pairs are disulfide-bonded: C7/C43, C23/C39, and C26/C52. V72 carries the post-translational modification Valine amide.

Produced by the medulla terminalis X-organ in the eyestalks and transported to the sinus gland where they are stored and released.

The protein localises to the secreted. Hormone found in the sinus gland of isopods and decapods which controls the blood sugar level. Has a secretagogue action over the amylase released from the midgut gland. May act as a stress hormone and may be involved in the control of molting and reproduction. This Astacus astacus (Noble crayfish) protein is Crustacean hyperglycemic hormone.